Here is a 226-residue protein sequence, read N- to C-terminus: Late protein I226R (226 aa).

The N-terminal stretch at 1-16 (MKMETFLVCLFHNAKG) is a signal peptide. N-linked (GlcNAc...) asparagine; by host glycosylation is present at asparagine 164.

This sequence belongs to the asfivirus I226R family.

Its function is as follows. Plays a role in the inhibition of host NF-kappa-B and IRF3 signaling pathways. Mechanistically, promotes the degradation of host IKBKG through enhancing its ubiquitination leading to inhibition of both pathways. This is Late protein I226R from Ornithodoros (relapsing fever ticks).